We begin with the raw amino-acid sequence, 110 residues long: Ribonuclease P protein component (110 aa).

It belongs to the RnpA family. In terms of assembly, consists of a catalytic RNA component (M1 or rnpB) and a protein subunit.

It catalyses the reaction Endonucleolytic cleavage of RNA, removing 5'-extranucleotides from tRNA precursor.. Functionally, RNaseP catalyzes the removal of the 5'-leader sequence from pre-tRNA to produce the mature 5'-terminus. It can also cleave other RNA substrates such as 4.5S RNA. The protein component plays an auxiliary but essential role in vivo by binding to the 5'-leader sequence and broadening the substrate specificity of the ribozyme. This is Ribonuclease P protein component from Mesorhizobium japonicum (strain LMG 29417 / CECT 9101 / MAFF 303099) (Mesorhizobium loti (strain MAFF 303099)).